The primary structure comprises 356 residues: MPLALQRSTLEEFFKRTWARRGLAAWLLRPLSAVFGVLSALRRLCYRFGIAKAQRMRVPVIVVGNIFVGGTGKTPLTIWLAQTLRQAGFHPGVISRGYGASSDVPRAVTPDAQAREVGDEPLLIAHRTQCPVMVGRDRVAVAQALLAAHPQVDVIISDDGLQHYRLARDIEIMLFDGRGNGNGWLLPAGPLREPVSRRRDFTVINGSPEETAMPPDVIQMHLSGVMAEPLAATNLPLEDVPSRALRSFSAASTGFSPARILAAAGIGNPERFFAQLRAAGLQFDEMPLPDHYDFVDNPFAAVNADVILITEKDAVKCRQNDALRNDPRVWVVPVTAHLDDAFAEQIVEKLRGHSIA.

Residue 67–74 coordinates ATP; sequence FVGGTGKT.

This sequence belongs to the LpxK family.

The enzyme catalyses a lipid A disaccharide + ATP = a lipid IVA + ADP + H(+). It participates in glycolipid biosynthesis; lipid IV(A) biosynthesis; lipid IV(A) from (3R)-3-hydroxytetradecanoyl-[acyl-carrier-protein] and UDP-N-acetyl-alpha-D-glucosamine: step 6/6. Transfers the gamma-phosphate of ATP to the 4'-position of a tetraacyldisaccharide 1-phosphate intermediate (termed DS-1-P) to form tetraacyldisaccharide 1,4'-bis-phosphate (lipid IVA). This is Tetraacyldisaccharide 4'-kinase from Herminiimonas arsenicoxydans.